The primary structure comprises 367 residues: Inactive serine protease 39 (367 aa).

A signal peptide spans 1-31; the sequence is MWGSRAQQSGPDRGGACLLAAFLLCFSLLHA. Residues 68–312 enclose the Peptidase S1 domain; that stretch reads IYGGQIAKAE…FSDWIKQKKA (245 aa). Cystine bridges form between C93–C109, C192–C269, C225–C248, and C259–C287.

Belongs to the peptidase S1 family. In terms of tissue distribution, expressed in testis. More specifically, abundantly expressed in the haploid round spermatid.

The protein resides in the cytoplasmic vesicle. It localises to the secretory vesicle. Its subcellular location is the acrosome. It is found in the secreted. In terms of biological role, may play an important role in the sperm/egg interaction; released during the acrosome reaction. This chain is Inactive serine protease 39 (Prss39), found in Mus musculus (Mouse).